We begin with the raw amino-acid sequence, 284 residues long: Cell division protein ZipA (284 aa).

Position 1 (methionine 1) is a topological domain, periplasmic. Residues 2–22 traverse the membrane as a helical segment; sequence EIGLREWLIVIGIIVIAGILF. At 23 to 284 the chain is on the cytoplasmic side; that stretch reads DGWRRMRGGK…FERRALTQKR (262 aa). The disordered stretch occupies residues 47–140; sequence PDDEGSAELL…SASHSDKDQP (94 aa). Composition is skewed to basic and acidic residues over residues 62-75, 83-102, and 119-140; these read LDTH…EHDL, REPR…EPHQ, and SRDD…KDQP.

The protein belongs to the ZipA family. In terms of assembly, interacts with FtsZ via their C-terminal domains.

Its subcellular location is the cell inner membrane. In terms of biological role, essential cell division protein that stabilizes the FtsZ protofilaments by cross-linking them and that serves as a cytoplasmic membrane anchor for the Z ring. Also required for the recruitment to the septal ring of downstream cell division proteins. This is Cell division protein ZipA from Pseudomonas fluorescens (strain ATCC BAA-477 / NRRL B-23932 / Pf-5).